A 317-amino-acid polypeptide reads, in one-letter code: ADIPOR-like receptor IZH2 (317 aa).

Over 1–78 the chain is Cytoplasmic; the sequence is MSTLLERTKS…TFKSLFYLHN (78 aa). The helical transmembrane segment at 79–99 threads the bilayer; the sequence is ESVNIYSHLIPALGFFTVLLL. Residues 100–110 are Extracellular-facing; it reads DKSTIKVFATT. The helical transmembrane segment at 111 to 131 threads the bilayer; it reads TWLDHMVIDLFYSGAFACLIL. Topologically, residues 132–153 are cytoplasmic; the sequence is SSSFHCLKSHSLRIATLGNKLD. The chain crosses the membrane as a helical span at residues 154–174; the sequence is YLGICILIVTSMVSILYYGYF. At 175-176 the chain is on the extracellular side; the sequence is EK. Residues 177–197 form a helical membrane-spanning segment; sequence FSLFCLFALITVSFGIACSIV. At 198–212 the chain is on the cytoplasmic side; sequence SLKDKFRKREWRPYR. Residues 213–233 form a helical membrane-spanning segment; it reads AGLFVCFGLSSIIPIFSGLYC. Residues 234–242 are Extracellular-facing; the sequence is YSFSEIWTQ. The helical transmembrane segment at 243–263 threads the bilayer; the sequence is IQLFWVLLGGVLYIIGAVLYG. The Cytoplasmic portion of the chain corresponds to 264–276; that stretch reads MRFPEKICPGKFD. The helical transmembrane segment at 277–297 threads the bilayer; the sequence is IWGHSHQLFHFLVVIAALCHL. The Extracellular portion of the chain corresponds to 298–317; that stretch reads RGLLNSYELVHIKMENGIVS.

It belongs to the ADIPOR family.

The protein resides in the membrane. Its function is as follows. Probable receptor, which is involved in metabolic pathways that regulate lipid metabolism such as fatty acid oxidation. This is ADIPOR-like receptor IZH2 (IZH2) from Saccharomyces cerevisiae (strain ATCC 204508 / S288c) (Baker's yeast).